Reading from the N-terminus, the 450-residue chain is Bifunctional apoptosis regulator (450 aa).

The segment at 1-24 (MEEPQKNDLSMRGQEEDHPVRSSG) is disordered. The Cytoplasmic portion of the chain corresponds to 1–140 (MEEPQKNDLS…PSTGRVNQQR (140 aa)). The RING-type zinc-finger motif lies at 34-74 (CHCCYDTLVNPTTLNCGHSFCRHCLALWWMSSKKTECPECR). A helical membrane pass occupies residues 141–161 (GGGFFSGVLTALTGVAVILLV). Residues 162–331 (YHWRSRESEH…REPTWKQWRE (170 aa)) are Extracellular-facing. Residues 182 to 249 (WTTEEVVLWL…LMELERVRAL (68 aa)) form the SAM domain. Residue Asn-232 is glycosylated (N-linked (GlcNAc...) asparagine). Residues 332 to 352 (FLIKYSFLPYQLIAEFAWDWL) form a helical membrane-spanning segment. Residues 353–360 (EVHYWTSR) are Cytoplasmic-facing. Residues 361 to 381 (FLIVNAMLLSVLELFSFWRIW) traverse the membrane as a helical segment. Residues 382-404 (SRSELKTVPQRMWSHFWKVSTQG) lie on the Extracellular side of the membrane. Residues 405-425 (LFMAMFWPLIPQFVCNCLFYW) traverse the membrane as a helical segment. The Cytoplasmic portion of the chain corresponds to 426 to 450 (ALYFNPIINIDLVVKEIRRLETQVF).

In terms of assembly, interacts with CASP8, BCL2 and BCL2L1 through SAM domain and also with HIP1, IFT57, ESRRBL1 and BCAP31. Interacts with NGFR; this interaction inhibits NF-kappa-B and JNK-related signaling pathways. Mediates RING-dependent self-ubiquitination leading to proteasomal degradation.

The protein localises to the endoplasmic reticulum membrane. It catalyses the reaction S-ubiquitinyl-[E2 ubiquitin-conjugating enzyme]-L-cysteine + [acceptor protein]-L-lysine = [E2 ubiquitin-conjugating enzyme]-L-cysteine + N(6)-ubiquitinyl-[acceptor protein]-L-lysine.. Its function is as follows. Membrane-bound E3 ubiquitin ligase that plays a role in several processes including apoptosis regulation or reticulum endoplasmic stress. Has anti-apoptotic activity, both for apoptosis triggered via death-receptors and via mitochondrial factors. Contributes to the dynamic control of IRE1/ERN1 signaling during ER stress by inducing BAX inhibitor 1/TMBIM6 proteasomal degradation. Promotes the activation of TGF-beta signaling by mediating the 'Lys-63'-linked ubiquitination of TGFBR1 which is critical to activate the pathway. Together with NGFR, negatively regulates NF-kappa-B and JNK-related signaling pathways. Promotes the proteasome-mediated degradation of PNPLA3, a protein involveld in lipid metabolism. The sequence is that of Bifunctional apoptosis regulator (Bfar) from Rattus norvegicus (Rat).